A 219-amino-acid polypeptide reads, in one-letter code: Ribonuclease T (219 aa).

The region spanning 20-194 is the Exonuclease domain; sequence VVIDIETAGF…YDSLQTANLF (175 aa). The Mg(2+) site is built by Asp-23, Glu-25, His-181, and Asp-186. The active-site Proton donor/acceptor is the His-181.

It belongs to the RNase T family. As to quaternary structure, homodimer. It depends on Mg(2+) as a cofactor.

In terms of biological role, trims short 3' overhangs of a variety of RNA species, leaving a one or two nucleotide 3' overhang. Responsible for the end-turnover of tRNA: specifically removes the terminal AMP residue from uncharged tRNA (tRNA-C-C-A). Also appears to be involved in tRNA biosynthesis. This Buchnera aphidicola subsp. Schizaphis graminum (strain Sg) protein is Ribonuclease T.